The sequence spans 206 residues: Small ribosomal subunit protein uS4 (206 aa).

The S4 RNA-binding domain maps to 96 to 156; that stretch reads CRLDNVVYRM…EKSSNQLRIV (61 aa).

Belongs to the universal ribosomal protein uS4 family. As to quaternary structure, part of the 30S ribosomal subunit. Contacts protein S5. The interaction surface between S4 and S5 is involved in control of translational fidelity.

One of the primary rRNA binding proteins, it binds directly to 16S rRNA where it nucleates assembly of the body of the 30S subunit. Its function is as follows. With S5 and S12 plays an important role in translational accuracy. The protein is Small ribosomal subunit protein uS4 of Pseudomonas putida (strain W619).